The sequence spans 468 residues: 3-isopropylmalate dehydratase large subunit (468 aa).

Residues Cys-347, Cys-408, and Cys-411 each coordinate [4Fe-4S] cluster.

It belongs to the aconitase/IPM isomerase family. LeuC type 1 subfamily. Heterodimer of LeuC and LeuD. The cofactor is [4Fe-4S] cluster.

The enzyme catalyses (2R,3S)-3-isopropylmalate = (2S)-2-isopropylmalate. The protein operates within amino-acid biosynthesis; L-leucine biosynthesis; L-leucine from 3-methyl-2-oxobutanoate: step 2/4. Catalyzes the isomerization between 2-isopropylmalate and 3-isopropylmalate, via the formation of 2-isopropylmaleate. This is 3-isopropylmalate dehydratase large subunit from Janthinobacterium sp. (strain Marseille) (Minibacterium massiliensis).